A 316-amino-acid chain; its full sequence is Epiphycan (316 aa).

An N-terminal signal peptide occupies residues Met-1–Thr-23. Ser-98 carries O-linked (Xyl...) (dermatan sulfate) serine glycosylation. The LRRNT domain occupies Val-100–Lys-137. Cysteines 112 and 124 form a disulfide. LRR repeat units lie at residues Asn-138–Asn-159, Asn-162–Arg-183, Gln-186–Leu-207, Glu-232–Glu-252, Ser-253–Lys-274, and Ala-284–Tyr-304. Cys-273 and Cys-306 are joined by a disulfide. Residue Asn-296 is glycosylated (N-linked (GlcNAc...) asparagine).

The protein belongs to the small leucine-rich proteoglycan (SLRP) family. SLRP class III subfamily. Post-translationally, the O-linked glycosaminoglycan chain(s) are dermatan sulfate. As to expression, preferentially expressed in flattened chondrocytes of developing chick limb cartilage. Also found in the cartilage peripheral zone bordering with bone marrow cavity.

The protein localises to the secreted. It localises to the extracellular space. It is found in the extracellular matrix. Functionally, may have a role in bone formation and also in establishing the ordered structure of cartilage through matrix organization. In Gallus gallus (Chicken), this protein is Epiphycan (EPYC).